Consider the following 188-residue polypeptide: Casparian strip membrane protein 1 (188 aa).

Residues 1-24 are Cytoplasmic-facing; that stretch reads MKAGALELGHASKTTKSGVNRGMS. A helical membrane pass occupies residues 25 to 45; sequence ILDLFIRIIAIIATLGSAIAM. The Extracellular portion of the chain corresponds to 46–72; that stretch reads GTTNETLPFFTQFVRFKAKYSDLPTFT. N-linked (GlcNAc...) asparagine glycosylation is present at asparagine 49. The helical transmembrane segment at 73-93 threads the bilayer; sequence FFVVANAIVSAYLVLSLGLSI. Residues 94-105 lie on the Cytoplasmic side of the membrane; sequence YHIMRSRAQATR. A helical transmembrane segment spans residues 106–126; that stretch reads IALIFFDAAMLGLLTGGASAS. Topologically, residues 127–159 are extracellular; the sequence is AAIVYLAHKGNRKTNWFPICQQYDSFCHRTSGS. Residues 160–180 form a helical membrane-spanning segment; it reads LVGSFAGSVLIILLIFLSAIA. Residues 181–188 are Cytoplasmic-facing; it reads LSRQSLNH.

This sequence belongs to the Casparian strip membrane proteins (CASP) family. As to quaternary structure, homodimer and heterodimers.

The protein localises to the cell membrane. Regulates membrane-cell wall junctions and localized cell wall deposition. Required for establishment of the Casparian strip membrane domain (CSD) and the subsequent formation of Casparian strips, a cell wall modification of the root endodermis that determines an apoplastic barrier between the intraorganismal apoplasm and the extraorganismal apoplasm and prevents lateral diffusion. The sequence is that of Casparian strip membrane protein 1 from Solanum tuberosum (Potato).